Reading from the N-terminus, the 93-residue chain is Putative pterin-4-alpha-carbinolamine dehydratase (93 aa).

The protein belongs to the pterin-4-alpha-carbinolamine dehydratase family.

It carries out the reaction (4aS,6R)-4a-hydroxy-L-erythro-5,6,7,8-tetrahydrobiopterin = (6R)-L-erythro-6,7-dihydrobiopterin + H2O. The sequence is that of Putative pterin-4-alpha-carbinolamine dehydratase from Nostoc sp. (strain PCC 7120 / SAG 25.82 / UTEX 2576).